The chain runs to 254 residues: Ciliary microtubule associated protein 1A (254 aa).

STPGR repeat units lie at residues 180–205 and 216–241; these read PGPA…MAAR and PGPG…FGIK. The disordered stretch occupies residues 207–226; sequence EPPGDKTLKPGPGAHSPEKV.

This sequence belongs to the CIMAP family. Microtubule inner protein component of sperm flagellar doublet microtubules.

The protein resides in the cytoplasm. Its subcellular location is the cytoskeleton. It is found in the flagellum axoneme. In terms of biological role, outer dense fibers are filamentous structures located on the outside of the axoneme in the midpiece and principal piece of the mammalian sperm tail. May help to maintain the passive elastic structures and elastic recoil of the sperm tail. The polypeptide is Ciliary microtubule associated protein 1A (CIMAP1A) (Bos taurus (Bovine)).